The primary structure comprises 504 residues: Maturase K (504 aa).

The protein belongs to the intron maturase 2 family. MatK subfamily.

Its subcellular location is the plastid. It localises to the chloroplast. Functionally, usually encoded in the trnK tRNA gene intron. Probably assists in splicing its own and other chloroplast group II introns. In Simmondsia chinensis (Jojoba), this protein is Maturase K.